Reading from the N-terminus, the 240-residue chain is Large ribosomal subunit protein uL2 (240 aa).

Positions 199–240 (DHPFGGGGRQHPGRPKSVSRDAAPGRKVGDIASKRTGRGGNE) are disordered. Residues 221–231 (APGRKVGDIAS) show a composition bias toward basic and acidic residues.

This sequence belongs to the universal ribosomal protein uL2 family. As to quaternary structure, part of the 50S ribosomal subunit. Forms a bridge to the 30S subunit in the 70S ribosome.

In terms of biological role, one of the primary rRNA binding proteins. Required for association of the 30S and 50S subunits to form the 70S ribosome, for tRNA binding and peptide bond formation. It has been suggested to have peptidyltransferase activity; this is somewhat controversial. Makes several contacts with the 16S rRNA in the 70S ribosome. The protein is Large ribosomal subunit protein uL2 of Halobacterium salinarum (strain ATCC 29341 / DSM 671 / R1).